The following is a 192-amino-acid chain: MFEYLKGIVAKIDPAYVVLDVNGIGYKILCPTPYSYQENQPATIYVEQVVRDTGITLYGFLSLEDKELFLKLLSVSGIGPKSAVAIMAAEDTDSLASAIQNGEVKYLTRFPGVGKKTASQIVLDLKGKLGDYVKKSAVATDLTPSLQDALLALVALGYTQKEVDRITPKLAKLPENTADGYIKEALALLLKK.

Positions 1 to 61 (MFEYLKGIVA…DTGITLYGFL (61 aa)) are domain I. The tract at residues 62–137 (SLEDKELFLK…KLGDYVKKSA (76 aa)) is domain II. Residues 137 to 140 (AVAT) form a flexible linker region. The segment at 141 to 192 (DLTPSLQDALLALVALGYTQKEVDRITPKLAKLPENTADGYIKEALALLLKK) is domain III.

This sequence belongs to the RuvA family. As to quaternary structure, homotetramer. Forms an RuvA(8)-RuvB(12)-Holliday junction (HJ) complex. HJ DNA is sandwiched between 2 RuvA tetramers; dsDNA enters through RuvA and exits via RuvB. An RuvB hexamer assembles on each DNA strand where it exits the tetramer. Each RuvB hexamer is contacted by two RuvA subunits (via domain III) on 2 adjacent RuvB subunits; this complex drives branch migration. In the full resolvosome a probable DNA-RuvA(4)-RuvB(12)-RuvC(2) complex forms which resolves the HJ.

Its subcellular location is the cytoplasm. Its function is as follows. The RuvA-RuvB-RuvC complex processes Holliday junction (HJ) DNA during genetic recombination and DNA repair, while the RuvA-RuvB complex plays an important role in the rescue of blocked DNA replication forks via replication fork reversal (RFR). RuvA specifically binds to HJ cruciform DNA, conferring on it an open structure. The RuvB hexamer acts as an ATP-dependent pump, pulling dsDNA into and through the RuvAB complex. HJ branch migration allows RuvC to scan DNA until it finds its consensus sequence, where it cleaves and resolves the cruciform DNA. This chain is Holliday junction branch migration complex subunit RuvA, found in Lactobacillus gasseri (strain ATCC 33323 / DSM 20243 / BCRC 14619 / CIP 102991 / JCM 1131 / KCTC 3163 / NCIMB 11718 / NCTC 13722 / AM63).